Here is a 102-residue protein sequence, read N- to C-terminus: Large ribosomal subunit protein bL21 (102 aa).

The protein belongs to the bacterial ribosomal protein bL21 family. Part of the 50S ribosomal subunit. Contacts protein L20.

In terms of biological role, this protein binds to 23S rRNA in the presence of protein L20. This is Large ribosomal subunit protein bL21 from Bacillus velezensis (strain DSM 23117 / BGSC 10A6 / LMG 26770 / FZB42) (Bacillus amyloliquefaciens subsp. plantarum).